A 208-amino-acid polypeptide reads, in one-letter code: Ras-related protein Rab-6A (208 aa).

S2 carries the post-translational modification N-acetylserine. S23, V24, G25, K26, T27, S28, D39, N40, Y42, and T45 together coordinate GTP. T27 lines the Mg(2+) pocket. Positions 32–50 (RFMYDSFDNTYQATIGIDF) match the Switch 1 motif. Mg(2+) contacts are provided by T45 and D68. A Switch 2 motif is present at residues 69 to 88 (TAGQERFRSLIPSYIRDSTV). Positions 71, 126, 127, 129, 156, 157, and 158 each coordinate GTP. S184 is subject to Phosphoserine. 2 S-geranylgeranyl cysteine lipidation sites follow: C206 and C208. Residue C208 is modified to Cysteine methyl ester.

It belongs to the small GTPase superfamily. Rab family. Interacts with BICDL1; leads to its accumulation in the pericentrosomal region. Interacts with SCYL1BP1. Interacts with VSP52. Interacts with RABGAP1. Interacts with GCC2 (via its GRIP domain). Interacts with RAB6IP1 (via its RUN 1 domain). Interacts with TMF1. Interacts with CIMAP3. Interacts (GTP-bound) with APBA1/MINT1 isoform 3, also called Mint1_826, but not with isoform 1. Interacts with RIC1; the interaction is direct with a preference for RAB6A-GDP. Interacts with RGP1; the interaction is direct with a preference for RAB6A-GDP. In terms of assembly, interacts (GTP-bound) with DYNLRB1; the interaction is direct. Interacts with BICD1. Interacts with BICD2; the interaction is direct. Interacts (GTP-bound) with VPS13B. As to quaternary structure, interacts with BICD1. Interacts (GDP-bound) with DYNLRB1; the interaction is direct. Interacts (GTP-bound) with VPS13B. Mg(2+) is required as a cofactor. Post-translationally, prenylated.

The protein resides in the golgi apparatus membrane. The protein localises to the cytoplasmic vesicle. It is found in the secretory vesicle. It localises to the acrosome membrane. It catalyses the reaction GTP + H2O = GDP + phosphate + H(+). Its activity is regulated as follows. Regulated by guanine nucleotide exchange factors (GEFs) which promote the exchange of bound GDP for free GTP. Regulated by GTPase activating proteins (GAPs) which increase the GTP hydrolysis activity. Inhibited by GDP dissociation inhibitors (GDIs). Its function is as follows. The small GTPases Rab are key regulators of intracellular membrane trafficking, from the formation of transport vesicles to their fusion with membranes. Rabs cycle between an inactive GDP-bound form and an active GTP-bound form that is able to recruit to membranes different sets of downstream effectors directly responsible for vesicle formation, movement, tethering and fusion. RAB6A acts as a regulator of COPI-independent retrograde transport from the Golgi apparatus towards the endoplasmic reticulum (ER). Has a low GTPase activity. Recruits VPS13B to the Golgi membrane. Plays a role in neuron projection development. The polypeptide is Ras-related protein Rab-6A (Mus musculus (Mouse)).